The primary structure comprises 55 residues: Large ribosomal subunit protein uL30 (55 aa).

Belongs to the universal ribosomal protein uL30 family. As to quaternary structure, part of the 50S ribosomal subunit.

Its function is as follows. Binds the 5S and 23S rRNAs. This Deinococcus radiodurans (strain ATCC 13939 / DSM 20539 / JCM 16871 / CCUG 27074 / LMG 4051 / NBRC 15346 / NCIMB 9279 / VKM B-1422 / R1) protein is Large ribosomal subunit protein uL30.